The sequence spans 278 residues: uncharacterized protein (278 aa).

The region spanning 1–55 (MKIRERFSMVDLPVLIITAAIIGHDKYKAFHAGANDILQKPYHYSEFMARIQNLI) is the Response regulatory domain.

This is an uncharacterized protein from Bacillus subtilis (strain 168).